Reading from the N-terminus, the 79-residue chain is Putative defensin-like protein 80 (79 aa).

An N-terminal signal peptide occupies residues 1 to 26; sequence MDVQRSSYIFIALSIIAMFLITGVKP. 4 disulfides stabilise this stretch: Cys-32–Cys-65, Cys-36–Cys-58, Cys-44–Cys-63, and Cys-48–Cys-64.

It belongs to the DEFL family.

Its subcellular location is the secreted. This Arabidopsis thaliana (Mouse-ear cress) protein is Putative defensin-like protein 80 (LCR81).